The primary structure comprises 469 residues: UDP-N-acetylmuramoylalanine--D-glutamate ligase (469 aa).

Position 121–127 (G121–T127) interacts with ATP.

This sequence belongs to the MurCDEF family.

It localises to the cytoplasm. It catalyses the reaction UDP-N-acetyl-alpha-D-muramoyl-L-alanine + D-glutamate + ATP = UDP-N-acetyl-alpha-D-muramoyl-L-alanyl-D-glutamate + ADP + phosphate + H(+). Its pathway is cell wall biogenesis; peptidoglycan biosynthesis. In terms of biological role, cell wall formation. Catalyzes the addition of glutamate to the nucleotide precursor UDP-N-acetylmuramoyl-L-alanine (UMA). The chain is UDP-N-acetylmuramoylalanine--D-glutamate ligase from Agrobacterium fabrum (strain C58 / ATCC 33970) (Agrobacterium tumefaciens (strain C58)).